A 323-amino-acid chain; its full sequence is MSPTTQAWSINNTVVKENYYTEILSCITTFNTLNFLIVIISVVGMAGNATVLWLLGFHMHRNAFSVYVLNLAGADFLYLCAQTVYSLECVLQFDNSYFYFLLTILMFNYLAGFCMIAAISTERCLSVTWPIWYHCQRPRHTSATVCALFWAFSLLLSLLLGQGCGFLFSKFDYSFCRYCNFIATAFLIVIFMVLFVSSLALLAKIICGSHRIPVTRFYVTIALTVLVFIFFGLPIGICVFLLPWIHMMLSSFFYEMVTLLSCVNSCANPIIYFFVGSIRHHRLQRQTLKLLLQRAMQDTPEEEGGERGPSQKSEDLEVVRCSS.

The Extracellular segment spans residues 1–34; that stretch reads MSPTTQAWSINNTVVKENYYTEILSCITTFNTLN. The N-linked (GlcNAc...) asparagine glycan is linked to asparagine 11. Residues 35-55 form a helical membrane-spanning segment; the sequence is FLIVIISVVGMAGNATVLWLL. Residues 56 to 63 are Cytoplasmic-facing; that stretch reads GFHMHRNA. The helical transmembrane segment at 64–84 threads the bilayer; it reads FSVYVLNLAGADFLYLCAQTV. Residues 85–98 lie on the Extracellular side of the membrane; the sequence is YSLECVLQFDNSYF. The helical transmembrane segment at 99–119 threads the bilayer; that stretch reads YFLLTILMFNYLAGFCMIAAI. Residues 120-147 are Cytoplasmic-facing; it reads STERCLSVTWPIWYHCQRPRHTSATVCA. The chain crosses the membrane as a helical span at residues 148 to 168; it reads LFWAFSLLLSLLLGQGCGFLF. The Extracellular portion of the chain corresponds to 169–180; it reads SKFDYSFCRYCN. Residues 181–201 form a helical membrane-spanning segment; that stretch reads FIATAFLIVIFMVLFVSSLAL. Over 202 to 224 the chain is Cytoplasmic; that stretch reads LAKIICGSHRIPVTRFYVTIALT. Residues 225 to 245 traverse the membrane as a helical segment; the sequence is VLVFIFFGLPIGICVFLLPWI. At 246–255 the chain is on the extracellular side; sequence HMMLSSFFYE. The helical transmembrane segment at 256–276 threads the bilayer; the sequence is MVTLLSCVNSCANPIIYFFVG. Residues 277-323 are Cytoplasmic-facing; sequence SIRHHRLQRQTLKLLLQRAMQDTPEEEGGERGPSQKSEDLEVVRCSS. A disordered region spans residues 298-323; that stretch reads DTPEEEGGERGPSQKSEDLEVVRCSS. Basic and acidic residues predominate over residues 312–323; the sequence is KSEDLEVVRCSS.

This sequence belongs to the G-protein coupled receptor 1 family. Mas subfamily. In terms of tissue distribution, expressed strongly in newborn dorsal root ganglia, adult dorsal root ganglia and trigeminal ganlia.

It is found in the membrane. Its function is as follows. Orphan receptor. Probably involved in the function of nociceptive neurons. May regulate nociceptor function and/or development, including the sensation or modulation of pain. The protein is Mas-related G-protein coupled receptor member B4 (Mrgprb4) of Rattus norvegicus (Rat).